Consider the following 109-residue polypeptide: Urocortin-2 (109 aa).

An N-terminal signal peptide occupies residues 1–22; it reads MTRWALVVFMVLMLDRVPGTPI. The propeptide occupies 23-67; that stretch reads PTFQLLPQNYPETTPSSVSSESPSDTTTGPSASWSNSKASPYLDT. Positions 24-60 are disordered; sequence TFQLLPQNYPETTPSSVSSESPSDTTTGPSASWSNSK. Residues 33-50 are compositionally biased toward low complexity; that stretch reads PETTPSSVSSESPSDTTT. Positions 51-60 are enriched in polar residues; the sequence is GPSASWSNSK. Val106 carries the valine amide; partial modification.

It belongs to the sauvagine/corticotropin-releasing factor/urotensin I family. As to quaternary structure, binds with high affinity to CRF receptors 2-alpha and 2-beta. Glycosylated.

The protein resides in the secreted. Its function is as follows. Suppresses food intake, delays gastric emptying and decreases heat-induced edema. Might represent an endogenous ligand for maintaining homeostasis after stress. The polypeptide is Urocortin-2 (Ucn2) (Rattus norvegicus (Rat)).